Reading from the N-terminus, the 223-residue chain is Sigma non-opioid intracellular receptor 1 (223 aa).

Over 1-9 the chain is Lumenal; the sequence is MPWAAGRRW. The interval 2–8 is targeting to endoplasmic reticulum-associated lipid droplets; it reads PWAAGRR. Residues 10 to 30 traverse the membrane as a helical segment; that stretch reads AWITLILTIIAVLIQAAWLWL. The Cytoplasmic segment spans residues 31–223; sequence GTQNFVFSRE…LTTYLFGQDS (193 aa). An important for ligand-binding region spans residues 99–106; that stretch reads SLSEYVLL. The segment at 177 to 223 is C-terminal hydrophobic region; that stretch reads VIPSTLFFALADTFFSTQDYLTLFYTLRAYARGLRLELTTYLFGQDS.

Belongs to the ERG2 family. As to quaternary structure, homotrimer. Interacts with KCNA4. Interacts with KCNA2; cocaine consumption leads to increased interaction. Forms a ternary complex with ANK2 and ITPR3. The complex is disrupted by agonists. Interacts with RNF112 in an oxidative stress-regulated manner. Widely expressed with higher expression in liver, brain, kidney and thymus. Expressed throughout the brain with higher expression within cerebral cortex, hippocampus and cerebellum. Within the hippocampus expressed in cornu ammonis pyramidal neurons, the granular cells of the dentate gyrus as well as interneurons. Within the cerebellum, expressed in Purkinje cell bodies. Highly expressed in the brainstem and motor neurons of the spinal cord. Expressed by neural retina, retinal pigment epithelial cells and lens.

Its subcellular location is the nucleus inner membrane. The protein localises to the nucleus outer membrane. It localises to the nucleus envelope. It is found in the cytoplasmic vesicle. The protein resides in the endoplasmic reticulum membrane. Its subcellular location is the membrane. The protein localises to the lipid droplet. It localises to the cell junction. It is found in the cell membrane. The protein resides in the cell projection. Its subcellular location is the growth cone. The protein localises to the postsynaptic density membrane. Its function is as follows. Functions in lipid transport from the endoplasmic reticulum and is involved in a wide array of cellular functions probably through regulation of the biogenesis of lipid microdomains at the plasma membrane. Involved in the regulation of different receptors it plays a role in BDNF signaling and EGF signaling. Also regulates ion channels like the potassium channel and could modulate neurotransmitter release. Plays a role in calcium signaling through modulation together with ANK2 of the ITP3R-dependent calcium efflux at the endoplasmic reticulum. Plays a role in several other cell functions including proliferation, survival and death. Originally identified for its ability to bind various psychoactive drugs it is involved in learning processes, memory and mood alteration. Necessary for proper mitochondrial axonal transport in motor neurons, in particular the retrograde movement of mitochondria. Plays a role in protecting cells against oxidative stress-induced cell death via its interaction with RNF112. The protein is Sigma non-opioid intracellular receptor 1 (Sigmar1) of Mus musculus (Mouse).